The sequence spans 163 residues: UPF0478 protein SAB1599c (163 aa).

A helical transmembrane segment spans residues 7–27 (IAGIIAAIAFLILCIGIVAVL).

It belongs to the UPF0478 family.

The protein localises to the cell membrane. In Staphylococcus aureus (strain bovine RF122 / ET3-1), this protein is UPF0478 protein SAB1599c.